The chain runs to 209 residues: MKKGIIGKKIGMTQIFTEDGTRVPVTVIQAGPCVVTQKKTASIDGYSAVQVGFDSTPAANASKPMLGHCTKSGQGVFRYLREFKFDAASEMNLGDVLTVEQFTAGDFVDVTGTSIGKGFQGVIKRYNFRGGRASHGSRFHRAPGSIGASATPSRVFKNKKMPGQLGNTQVTMQCLQVIRVDADDNLLLIKGAIPGHRNNIVLIKNSVKA.

The protein belongs to the universal ribosomal protein uL3 family. As to quaternary structure, part of the 50S ribosomal subunit. Forms a cluster with proteins L14 and L19.

Functionally, one of the primary rRNA binding proteins, it binds directly near the 3'-end of the 23S rRNA, where it nucleates assembly of the 50S subunit. This chain is Large ribosomal subunit protein uL3, found in Pelobacter propionicus (strain DSM 2379 / NBRC 103807 / OttBd1).